The primary structure comprises 296 residues: Bifunctional protein FolD (296 aa).

Residues 170-172 and Ser-195 contribute to the NADP(+) site; that span reads GRS.

This sequence belongs to the tetrahydrofolate dehydrogenase/cyclohydrolase family. As to quaternary structure, homodimer.

The enzyme catalyses (6R)-5,10-methylene-5,6,7,8-tetrahydrofolate + NADP(+) = (6R)-5,10-methenyltetrahydrofolate + NADPH. The catalysed reaction is (6R)-5,10-methenyltetrahydrofolate + H2O = (6R)-10-formyltetrahydrofolate + H(+). It participates in one-carbon metabolism; tetrahydrofolate interconversion. Catalyzes the oxidation of 5,10-methylenetetrahydrofolate to 5,10-methenyltetrahydrofolate and then the hydrolysis of 5,10-methenyltetrahydrofolate to 10-formyltetrahydrofolate. In Rhodospirillum rubrum (strain ATCC 11170 / ATH 1.1.1 / DSM 467 / LMG 4362 / NCIMB 8255 / S1), this protein is Bifunctional protein FolD.